Reading from the N-terminus, the 246-residue chain is Cell division protein ZapD (246 aa).

The protein belongs to the ZapD family. Interacts with FtsZ.

The protein localises to the cytoplasm. Cell division factor that enhances FtsZ-ring assembly. Directly interacts with FtsZ and promotes bundling of FtsZ protofilaments, with a reduction in FtsZ GTPase activity. This is Cell division protein ZapD from Vibrio vulnificus (strain CMCP6).